A 120-amino-acid chain; its full sequence is UPF0102 protein Daro_0503 (120 aa).

The interval 1–20 (MQVKANDTTTARGREAEDRA) is disordered.

The protein belongs to the UPF0102 family.

This is UPF0102 protein Daro_0503 from Dechloromonas aromatica (strain RCB).